Here is a 406-residue protein sequence, read N- to C-terminus: Beta-galactoside alpha-2,6-sialyltransferase 1 (406 aa).

Topologically, residues 1–9 (MIHTNLKKK) are cytoplasmic. The helical; Signal-anchor for type II membrane protein transmembrane segment at 10-26 (FSCCVLVFLLFAVICVW) threads the bilayer. Over 27-406 (KEKKKGSYYD…TLPGFRTIHC (380 aa)) the chain is Lumenal. 3 disulfides stabilise this stretch: cysteine 142-cysteine 406, cysteine 184-cysteine 335, and cysteine 353-cysteine 364. N-linked (GlcNAc...) asparagine glycans are attached at residues asparagine 149 and asparagine 161. Substrate contacts are provided by residues serine 189, asparagine 212, asparagine 233, 322–324 (SSG), cysteine 353, tyrosine 354, threonine 365, tyrosine 369, histidine 370, and lysine 376. Residue tyrosine 369 is modified to Phosphotyrosine.

It belongs to the glycosyltransferase 29 family. As to quaternary structure, monomer and homodimer. In terms of processing, N-glycosylated.

It localises to the golgi apparatus. It is found in the golgi stack membrane. Its subcellular location is the secreted. It catalyses the reaction a beta-D-galactoside + CMP-N-acetyl-beta-neuraminate = an N-acetyl-alpha-neuraminyl-(2-&gt;6)-beta-D-galactosyl derivative + CMP + H(+). Its pathway is protein modification; protein glycosylation. With respect to regulation, inhibited by CTP. Its function is as follows. Transfers sialic acid from CMP-sialic acid to galactose-containing acceptor substrates. In B lymphocytes, generates neuraminidase-sensitive lymphocyte cell-surface differentiation antigens, such as CDw75, HB-6 and CD76. This is Beta-galactoside alpha-2,6-sialyltransferase 1 (ST6GAL1) from Homo sapiens (Human).